Here is a 417-residue protein sequence, read N- to C-terminus: MIKHYDVVIAGGGVIGASCAYQLSKRKDLKVALIDAKRPGNASRASAGGLWAIGESVGLGCGVIFFRMMSANRKREAQGSAVVVDSSTPHILPQSFFDFALQSNELYPRLHRELMGLHNMDFKFEQTGLKFVIYDEEDRLYAEHIVGCIPHLSDQVRWLDQAALRASEPNVSHEAQGALEFLCDHQVNPFRLTDAYTEGARQNGVDVYFNTNVTGVLHQGNRVSGVKTDVAGLFRCTTLINAAGAWAAELSLQATGIEIPVKPVKGQILLTERMPKLLNGCLTTSDCYMAQKDNGEILIGSTTEDKGFDVTTTYPEINGLVQGAVRCVPELAHVNLKRCWAGLRPGSPDELPILGPMDGVEGYLNACGHFRTGILTSAITGVLLDKLVNEEALPLDITPFLARRFATAPVKKQPEPA.

The N-terminal stretch at 1-18 (MIKHYDVVIAGGGVIGAS) is a signal peptide. Position 7–21 (7–21 (VVIAGGGVIGASCAY)) interacts with FAD. Cys-19 is lipidated: N-palmitoyl cysteine. Cys-19 carries the S-diacylglycerol cysteine lipid modification. A helical membrane pass occupies residues 46 to 66 (SAGGLWAIGESVGLGCGVIFF).

Belongs to the FAD-dependent glycerol-3-phosphate dehydrogenase family. In terms of assembly, heterotrimer of HcnA, HcnB and HcnC.

The protein localises to the cell membrane. It catalyses the reaction glycine + 2 A = hydrogen cyanide + 2 AH2 + CO2. Functionally, a three-component membrane-bound flavoenzyme that catalyzes the formation of hydrogen cyanide, a secondary metabolite, by transfer of electrons to a cyanide-resistant branch of the aerobic respiratory chain. Contributes to suppression of black root rot of tobacco. This is Hydrogen cyanide synthase subunit HcnC from Pseudomonas protegens (strain DSM 19095 / LMG 27888 / CFBP 6595 / CHA0).